The chain runs to 381 residues: Deoxyguanosinetriphosphate triphosphohydrolase-like protein (381 aa).

The HD domain occupies 76–203 (RMTHTLEVAG…ADLSDEIAYT (128 aa)).

The protein belongs to the dGTPase family. Type 2 subfamily.

This is Deoxyguanosinetriphosphate triphosphohydrolase-like protein from Leptospira interrogans serogroup Icterohaemorrhagiae serovar copenhageni (strain Fiocruz L1-130).